The primary structure comprises 218 residues: Large ribosomal subunit protein uL1 (218 aa).

Belongs to the universal ribosomal protein uL1 family. Part of the 50S ribosomal subunit.

In terms of biological role, probably involved in E site tRNA release. Binds directly to 23S rRNA. Functionally, protein L1 is also a translational repressor protein, it controls the translation of its operon by binding to its mRNA. The chain is Large ribosomal subunit protein uL1 from Saccharolobus solfataricus (strain ATCC 35092 / DSM 1617 / JCM 11322 / P2) (Sulfolobus solfataricus).